A 657-amino-acid polypeptide reads, in one-letter code: N-acetylgalactosaminyltransferase 7 (657 aa).

The Cytoplasmic portion of the chain corresponds to 1–6 (MRLKIG). A helical; Signal-anchor for type II membrane protein membrane pass occupies residues 7-29 (FILRSLLVVGSFLGLVVLWSSLS). Disordered regions lie at residues 30–66 (SRPDDQSPLSRMREDRDVNNPLPNRGGNGLAPGDDRF) and 83–105 (ESIRRKNKAKNEQERHAGGDSQR). Residues 30-657 (SRPDDQSPLS…KWEMNNIHSV (628 aa)) are Lumenal-facing. Cystine bridges form between Cys-197/Cys-435, Cys-426/Cys-507, Cys-545/Cys-562, Cys-585/Cys-600, and Cys-625/Cys-640. The tract at residues 206-317 (LLTSSVVIVF…VNWYAPLVAP (112 aa)) is catalytic subdomain A. The substrate site is built by Asp-247 and Arg-277. Residues Asp-301 and His-303 each contribute to the Mn(2+) site. The interval 381–443 (PYRSPAMAGG…PCSRVGHIYR (63 aa)) is catalytic subdomain B. Residue Trp-412 coordinates substrate. Residue His-440 participates in Mn(2+) binding. Residue Arg-443 participates in substrate binding. Positions 532 to 652 (VEWGEIRGLE…SKMTQKWEMN (121 aa)) constitute a Ricin B-type lectin domain.

This sequence belongs to the glycosyltransferase 2 family. GalNAc-T subfamily. The cofactor is Mn(2+). Highly expressed in sublingual gland. Expressed at lower level in stomach, small intestiine and colon.

It is found in the golgi apparatus membrane. It carries out the reaction L-seryl-[protein] + UDP-N-acetyl-alpha-D-galactosamine = a 3-O-[N-acetyl-alpha-D-galactosaminyl]-L-seryl-[protein] + UDP + H(+). The catalysed reaction is L-threonyl-[protein] + UDP-N-acetyl-alpha-D-galactosamine = a 3-O-[N-acetyl-alpha-D-galactosaminyl]-L-threonyl-[protein] + UDP + H(+). It functions in the pathway protein modification; protein glycosylation. In terms of biological role, glycopeptide transferase involved in O-linked oligosaccharide biosynthesis, which catalyzes the transfer of an N-acetyl-D-galactosamine residue to an already glycosylated peptide. In contrast to other proteins of the family, it does not act as a peptide transferase that transfers GalNAc onto serine or threonine residue on the protein receptor, but instead requires the prior addition of a GalNAc on a peptide before adding additional GalNAc moieties. Some peptide transferase activity is however not excluded, considering that its appropriate peptide substrate may remain unidentified. This is N-acetylgalactosaminyltransferase 7 (Galnt7) from Mus musculus (Mouse).